A 321-amino-acid chain; its full sequence is Lipoyl synthase (321 aa).

7 residues coordinate [4Fe-4S] cluster: Cys-68, Cys-73, Cys-79, Cys-94, Cys-98, Cys-101, and Ser-308. The 218-residue stretch at 80–297 (FNHGTATFMI…KDVAMGLGFS (218 aa)) folds into the Radical SAM core domain.

This sequence belongs to the radical SAM superfamily. Lipoyl synthase family. Requires [4Fe-4S] cluster as cofactor.

It localises to the cytoplasm. It catalyses the reaction [[Fe-S] cluster scaffold protein carrying a second [4Fe-4S](2+) cluster] + N(6)-octanoyl-L-lysyl-[protein] + 2 oxidized [2Fe-2S]-[ferredoxin] + 2 S-adenosyl-L-methionine + 4 H(+) = [[Fe-S] cluster scaffold protein] + N(6)-[(R)-dihydrolipoyl]-L-lysyl-[protein] + 4 Fe(3+) + 2 hydrogen sulfide + 2 5'-deoxyadenosine + 2 L-methionine + 2 reduced [2Fe-2S]-[ferredoxin]. The protein operates within protein modification; protein lipoylation via endogenous pathway; protein N(6)-(lipoyl)lysine from octanoyl-[acyl-carrier-protein]: step 2/2. Its function is as follows. Catalyzes the radical-mediated insertion of two sulfur atoms into the C-6 and C-8 positions of the octanoyl moiety bound to the lipoyl domains of lipoate-dependent enzymes, thereby converting the octanoylated domains into lipoylated derivatives. This Aeromonas hydrophila subsp. hydrophila (strain ATCC 7966 / DSM 30187 / BCRC 13018 / CCUG 14551 / JCM 1027 / KCTC 2358 / NCIMB 9240 / NCTC 8049) protein is Lipoyl synthase.